The sequence spans 547 residues: Kelch repeat and BTB domain-containing protein 2 (547 aa).

The region spanning 20–89 is the BTB domain; it reads CDVIITIGDG…LYNRHISSMN (70 aa). Kelch repeat units lie at residues 295–342, 343–389, and 391–454; these read DIII…VIDD, TIYA…VLDQ, and IYII…SHKD.

Interacts (via BTB domain) with host CUL3.

The protein localises to the host cytoplasm. Its function is as follows. Probable substrate-specific adapter of CUL3-containing E3 ubiquitin-protein ligases which mediate the ubiquitination and subsequent proteasomal degradation of host target proteins. The chain is Kelch repeat and BTB domain-containing protein 2 (KBTB2) from Bos taurus (Bovine).